Reading from the N-terminus, the 168-residue chain is Repressed By RIM101 protein 2 (168 aa).

The first 24 residues, 1–24, serve as a signal peptide directing secretion; sequence MRFAFTTVSLSLLLSSLVASDAAS. An N-linked (GlcNAc...) asparagine glycan is attached at asparagine 83. The tract at residues 111–149 is disordered; the sequence is SGSASGSGSAKSTASAEKSSGSSASASSTAGGSSSKGGV. A lipid anchor (GPI-anchor amidated serine) is attached at serine 143. The propeptide at 144-168 is removed in mature form; sequence SSKGGVSELVAPVGAVVGALAVALM.

Belongs to the SRP1/TIP1 family. In terms of processing, the GPI-anchor is attached to the protein in the endoplasmic reticulum and serves to target the protein to the cell surface. There, the glucosamine-inositol phospholipid moiety is cleaved off and the GPI-modified mannoprotein is covalently attached via its lipidless GPI glycan remnant to the 1,6-beta-glucan of the outer cell wall layer.

The protein localises to the secreted. It localises to the cell wall. The protein resides in the membrane. Its function is as follows. Probable cell wall protein which may have esterase activity, with a preference for esters of fatty acids from 4 to 16 carbon atoms. This Candida albicans (strain SC5314 / ATCC MYA-2876) (Yeast) protein is Repressed By RIM101 protein 2 (RBR2).